A 233-amino-acid polypeptide reads, in one-letter code: MKLFDHAPLSLAWREFLQSEFKKPYFLEIEKRYLEALKSPKTIFPKSSNLFHALNLTPPSAVKIILLGQDPYHSTYLKKEQELPVAMGLSFSVEKNAPIPPSLKNIFKELHANLGVPVSCCGDLSAWAKRGMLLLNAILSVEKNQAASHKYIGWEAFSDQILMRLFKTTAPLIVVLLGKVAQKKIVLIPKNKHIIITAPHPSPLSRGFLGSGVFTSVQKAYREVYRKDFDFSL.

Aspartate 70 (proton acceptor) is an active-site residue.

The protein belongs to the uracil-DNA glycosylase (UDG) superfamily. UNG family.

The protein localises to the cytoplasm. It catalyses the reaction Hydrolyzes single-stranded DNA or mismatched double-stranded DNA and polynucleotides, releasing free uracil.. Functionally, excises uracil residues from the DNA which can arise as a result of misincorporation of dUMP residues by DNA polymerase or due to deamination of cytosine. The polypeptide is Uracil-DNA glycosylase (Helicobacter pylori (strain P12)).